A 227-amino-acid chain; its full sequence is Enolase-phosphatase E1 (227 aa).

The protein belongs to the HAD-like hydrolase superfamily. MasA/MtnC family. Monomer. The cofactor is Mg(2+).

The catalysed reaction is 5-methylsulfanyl-2,3-dioxopentyl phosphate + H2O = 1,2-dihydroxy-5-(methylsulfanyl)pent-1-en-3-one + phosphate. It participates in amino-acid biosynthesis; L-methionine biosynthesis via salvage pathway; L-methionine from S-methyl-5-thio-alpha-D-ribose 1-phosphate: step 3/6. Its pathway is amino-acid biosynthesis; L-methionine biosynthesis via salvage pathway; L-methionine from S-methyl-5-thio-alpha-D-ribose 1-phosphate: step 4/6. Bifunctional enzyme that catalyzes the enolization of 2,3-diketo-5-methylthiopentyl-1-phosphate (DK-MTP-1-P) into the intermediate 2-hydroxy-3-keto-5-methylthiopentenyl-1-phosphate (HK-MTPenyl-1-P), which is then dephosphorylated to form the acireductone 1,2-dihydroxy-3-keto-5-methylthiopentene (DHK-MTPene). The sequence is that of Enolase-phosphatase E1 from Pseudomonas fluorescens (strain Pf0-1).